Reading from the N-terminus, the 398-residue chain is Phospholipase C (398 aa).

The N-terminal stretch at 1 to 28 (MKRKIYKLLICATIATSLWAVRTTKVYA) is a signal peptide. The Zn(2+) site is built by Trp-29, His-39, Asp-84, His-96, His-154, Asp-158, His-164, His-176, and Glu-180. Positions 29-278 (WDGKADGTGT…HDVSDGKDSS (250 aa)) constitute a Zn-dependent PLC domain. The linker stretch occupies residues 275 to 283 (KDSSANKNV). Positions 284 to 398 (NELVAYITTG…ISGNSTYNIK (115 aa)) constitute a PLAT domain. Residues Gly-299, Thr-300, Asp-301, Asp-321, Asn-322, Gly-324, Asn-325, Asp-326, and Asp-365 each contribute to the Ca(2+) site.

The cofactor is Ca(2+). It depends on Zn(2+) as a cofactor.

It localises to the secreted. It catalyses the reaction a 1,2-diacyl-sn-glycero-3-phosphocholine + H2O = phosphocholine + a 1,2-diacyl-sn-glycerol + H(+). Its function is as follows. Bacterial hemolysins are exotoxins that attack blood cell membranes and cause cell rupture. Constitutes an essential virulence factor in gas gangrene. Binds to eukaryotic membranes where it hydrolyzes both phosphatidylcholine and sphingomyelin, causing cell rupture. The diacylglycerol produced can activate both the arachidonic acid pathway, leading to modulation of the inflammatory response cascade and thrombosis, and protein kinase C, leading to activation of eukaryotic phospholipases and further membrane damage. In Clostridium perfringens, this protein is Phospholipase C (plc).